Here is a 397-residue protein sequence, read N- to C-terminus: Neuroplastin (397 aa).

The N-terminal stretch at Met-1–Ala-28 is a signal peptide. Ig-like domains lie at Gln-29–Thr-134, Pro-148–Lys-234, and Pro-237–Ser-327. At Gln-29–Pro-338 the chain is on the extracellular side. Cys-52 and Cys-116 are oxidised to a cystine. The tract at residues Arg-149–Ser-161 is narpin; mediates binding with FGFR1 and has antidepressant-like activity. A disulfide bond links Cys-169 and Cys-217. Asn-170, Asn-196, Asn-228, Asn-283, Asn-295, and Asn-316 each carry an N-linked (GlcNAc...) asparagine glycan. A disulfide bridge connects residues Cys-258 and Cys-315. The chain crosses the membrane as a helical span at residues Leu-339 to Tyr-359. The Cytoplasmic portion of the chain corresponds to Glu-360–Asn-397. Residues Arg-364–Asn-397 form a disordered region.

Interacts with ATP2B1; this interaction stabilizes ATP2B1 and increases ATPase activity; this interaction controls T cell calcium homeostasis following T cell activation. Interacts with XKR8; promoting its localization at the cell membrane. In terms of processing, N-glycosylated. In terms of tissue distribution, isoform 1 and isoform 2 are widely expressed with variable levels in brain. Isoform 1 is expressed in cerebellum and midbrain. Isoform 1 and isoform 2 are expressed in cerebral cortex, hippocampus and striatum. Isoform 2 is more abundant in the cerebral cortex than isoform 1.

It localises to the cell membrane. The protein resides in the postsynaptic density. Functionally, probable homophilic and heterophilic cell adhesion molecule involved in long term potentiation at hippocampal excitatory synapses through activation of p38MAPK. May also regulate neurite outgrowth by activating the FGFR1 signaling pathway. May play a role in synaptic plasticity. Also acts as a chaperone for ATP2B1; stabilizes ATP2B1 and increases its ATPase activity. Promotes localization of XKR8 at the cell membrane. The chain is Neuroplastin (Nptn) from Mus musculus (Mouse).